Consider the following 63-residue polypeptide: GQESCGPNEVWTECTGCEMKCGPDENTPCPLMCRRPSCECSPGRGMRRTNDGKCIPASQCPEH.

Intrachain disulfides connect Cys-5–Cys-38, Cys-14–Cys-33, Cys-17–Cys-29, Cys-21–Cys-60, and Cys-40–Cys-54. Residues 5-60 enclose the TIL domain; sequence CGPNEVWTECTGCEMKCGPDENTPCPLMCRRPSCECSPGRGMRRTNDGKCIPASQC.

It belongs to the serine protease inhibitor-like (TIL domain-containing) family.

Its subcellular location is the secreted. In terms of biological role, defends the organism against the host's proteinases. The polypeptide is Chymotrypsin/elastase isoinhibitor 1 (Ascaris suum (Pig roundworm)).